Reading from the N-terminus, the 221-residue chain is D-glycero-alpha-D-manno-heptose 1-phosphate guanylyltransferase (221 aa).

The protein belongs to the D-alpha-D-heptose-1-P guanylyltransferase family.

It carries out the reaction D-glycero-alpha-D-manno-heptose 1-phosphate + GTP + H(+) = GDP-D-glycero-alpha-D-manno-heptose + diphosphate. The protein operates within nucleotide-sugar biosynthesis; GDP-D-glycero-alpha-D-manno-heptose biosynthesis; GDP-D-glycero-alpha-D-manno-heptose from D-glycero-alpha-D-manno-heptose 7-phosphate: step 3/3. It participates in capsule biogenesis; capsule polysaccharide biosynthesis. Functionally, catalyzes the GDP transfer from GTP to D-glycero-alpha-D-manno-heptose 1-phosphate, yielding GDP-D-alpha-D-heptose. Is able to use ATP, CTP or UTP as substrate in the presence of pyrophosphatase, but at a significantly slower rate. Can also form GDP-alpha-D-mannose from alpha-D-mannose 1-phosphate and GTP. The polypeptide is D-glycero-alpha-D-manno-heptose 1-phosphate guanylyltransferase (Campylobacter jejuni subsp. jejuni serotype O:2 (strain ATCC 700819 / NCTC 11168)).